A 142-amino-acid polypeptide reads, in one-letter code: Large ribosomal subunit protein bL17 (142 aa).

The protein belongs to the bacterial ribosomal protein bL17 family. Part of the 50S ribosomal subunit. Contacts protein L32.

The chain is Large ribosomal subunit protein bL17 from Chlamydia felis (strain Fe/C-56) (Chlamydophila felis).